An 845-amino-acid chain; its full sequence is Poly(A) RNA polymerase gld-4 (845 aa).

Residues 1–55 form a disordered region; it reads MNEDSRLSSSQQPSTSTPRSSIPSTMNSDEPNTCRRLSQSQEQPSTSRTCKSETP. Over residues 7–25 the composition is skewed to low complexity; sequence LSSSQQPSTSTPRSSIPST. The segment covering 26 to 49 has biased composition (polar residues); sequence MNSDEPNTCRRLSQSQEQPSTSRT. Positions 139 and 141 each coordinate Mg(2+). Residues 276 to 335 form the PAP-associated domain; it reads NLGHLLLRFLELYSLEFNFEEMGISPGQCCYIPKSASGARYGHKQAQPGNLALEDPLLTA. A compositionally biased stretch (basic and acidic residues) spans 482–506; it reads KSLEKMPACDDNKKEEELVATRETD. 2 disordered regions span residues 482 to 733 and 788 to 845; these read KSLE…SEEP and NALT…RLQR. Residues 535–551 show a composition bias toward low complexity; the sequence is TSTQSVNTSATVSTAAS. Composition is skewed to polar residues over residues 561-571 and 579-588; these read PGLSSSMGNQS and GINNRNNSAV. The span at 605–620 shows a compositional bias: basic and acidic residues; it reads RESKRTQTTSEDKMQD. Basic residues predominate over residues 643-653; sequence SHKHRNAHPQR. Composition is skewed to polar residues over residues 654 to 666, 695 to 732, 788 to 805, and 819 to 828; these read QRPSIRNLSQGSD, RQQTNTRNCGPTNNIPYDSFRSQNKNSTLDGSNNSSEE, NALTTSPMTPPSAHTSMQ, and DNNSATSSTD.

Interacts with gls-1 isoform C. Requires Mg(2+) as cofactor. Mn(2+) is required as a cofactor. As to expression, germline-specific.

The protein resides in the cytoplasm. It localises to the cytoplasmic granule. Its subcellular location is the perinuclear region. It catalyses the reaction RNA(n) + ATP = RNA(n)-3'-adenine ribonucleotide + diphosphate. Functionally, cytoplasmic poly(A) RNA polymerase that adds successive AMP monomers to the 3'-end of specific RNAs, forming a poly(A) tail. The enzymatic activity is enhanced by its interaction with gls-1. Required, together with gld-2, for early meiotic progression in male and female germ cells and for gld-1 protein accumulation in the hermaphrodite germline. In the germline, forms a complex with gls-1 which directly binds to gld-1 mRNA and prevents its degradation. In Caenorhabditis elegans, this protein is Poly(A) RNA polymerase gld-4.